A 1487-amino-acid chain; its full sequence is Chromosome partition protein MukB (1487 aa).

34 to 41 (GGNGAGKS) lines the ATP pocket. 5 coiled-coil regions span residues 297-426 (SSRE…LEKA), 460-666 (ALKH…RLAS), 781-806 (RAAR…AKAA), 836-1111 (EQAL…RTFV), and 1210-1266 (VEAI…LSNI). The tract at residues 667-784 (PGGSNDPRLK…VIPLFGRAAR (118 aa)) is flexible hinge.

Belongs to the SMC family. MukB subfamily. In terms of assembly, homodimerization via its hinge domain. Binds to DNA via its C-terminal region. Interacts, and probably forms a ternary complex, with MukE and MukF via its C-terminal region. The complex formation is stimulated by calcium or magnesium. Interacts with tubulin-related protein FtsZ.

Its subcellular location is the cytoplasm. It is found in the nucleoid. Functionally, plays a central role in chromosome condensation, segregation and cell cycle progression. Functions as a homodimer, which is essential for chromosome partition. Involved in negative DNA supercoiling in vivo, and by this means organize and compact chromosomes. May achieve or facilitate chromosome segregation by condensation DNA from both sides of a centrally located replisome during cell division. The sequence is that of Chromosome partition protein MukB from Vibrio vulnificus (strain YJ016).